The primary structure comprises 659 residues: Exoribonuclease 2 (659 aa).

The RNB domain occupies Arg-189–Ala-531. Positions Lys-576–Val-658 constitute an S1 motif domain.

It belongs to the RNR ribonuclease family. RNase II subfamily.

The protein resides in the cytoplasm. The catalysed reaction is Exonucleolytic cleavage in the 3'- to 5'-direction to yield nucleoside 5'-phosphates.. In terms of biological role, involved in mRNA degradation. Hydrolyzes single-stranded polyribonucleotides processively in the 3' to 5' direction. In Actinobacillus succinogenes (strain ATCC 55618 / DSM 22257 / CCUG 43843 / 130Z), this protein is Exoribonuclease 2.